We begin with the raw amino-acid sequence, 574 residues long: Septation ring formation regulator EzrA (574 aa).

Residues 1–7 (MSSGIIL) lie on the Extracellular side of the membrane. Residues 8 to 26 (LIVAIVLLVIIAYLVGVII) traverse the membrane as a helical segment. The Cytoplasmic segment spans residues 27-574 (RKRNDSLITS…YEKTREHIRF (548 aa)). Coiled-coil stretches lie at residues 102–141 (NFIR…EEKN), 274–350 (ELVT…ETES), and 459–520 (QLEA…SFEA).

The protein belongs to the EzrA family.

The protein resides in the cell membrane. In terms of biological role, negative regulator of FtsZ ring formation; modulates the frequency and position of FtsZ ring formation. Inhibits FtsZ ring formation at polar sites. Interacts either with FtsZ or with one of its binding partners to promote depolymerization. In Streptococcus pyogenes serotype M3 (strain SSI-1), this protein is Septation ring formation regulator EzrA.